The following is a 314-amino-acid chain: Phosphoribosylaminoimidazole-succinocarboxamide synthase (314 aa).

Belongs to the SAICAR synthetase family.

It carries out the reaction 5-amino-1-(5-phospho-D-ribosyl)imidazole-4-carboxylate + L-aspartate + ATP = (2S)-2-[5-amino-1-(5-phospho-beta-D-ribosyl)imidazole-4-carboxamido]succinate + ADP + phosphate + 2 H(+). It participates in purine metabolism; IMP biosynthesis via de novo pathway; 5-amino-1-(5-phospho-D-ribosyl)imidazole-4-carboxamide from 5-amino-1-(5-phospho-D-ribosyl)imidazole-4-carboxylate: step 1/2. The protein is Phosphoribosylaminoimidazole-succinocarboxamide synthase of Bacteroides thetaiotaomicron (strain ATCC 29148 / DSM 2079 / JCM 5827 / CCUG 10774 / NCTC 10582 / VPI-5482 / E50).